A 56-amino-acid polypeptide reads, in one-letter code: Large ribosomal subunit protein bL32 (56 aa).

Residues 1 to 38 (MAVQQNKKSRSRRDMRRSHDALTTAAVSVDKTSGETHL) form a disordered region. Residues 7–16 (KKSRSRRDMR) are compositionally biased toward basic residues.

It belongs to the bacterial ribosomal protein bL32 family.

In Histophilus somni (strain 129Pt) (Haemophilus somnus), this protein is Large ribosomal subunit protein bL32.